Consider the following 266-residue polypeptide: Succinate dehydrogenase [ubiquinone] iron-sulfur subunit, mitochondrial (266 aa).

The N-terminal 20 residues, 1–20 (MLNVLLRRKAFCLVTKKGMA), are a transit peptide targeting the mitochondrion. The 2Fe-2S ferredoxin-type domain maps to 36–127 (FKVYRWNPDE…QLKIYPLPHM (92 aa)). Cys-87, Cys-92, Cys-95, and Cys-107 together coordinate [2Fe-2S] cluster. The 4Fe-4S ferredoxin-type domain maps to 169 to 199 (DRKKLDGLYECILCACCSTSCPSYWWNQEQY). [4Fe-4S] cluster-binding residues include Cys-179, Cys-182, and Cys-185. Position 189 (Cys-189) interacts with [3Fe-4S] cluster. Trp-194 provides a ligand contact to a ubiquinone. Residues Cys-236 and Cys-242 each coordinate [3Fe-4S] cluster. Cys-246 provides a ligand contact to [4Fe-4S] cluster.

This sequence belongs to the succinate dehydrogenase/fumarate reductase iron-sulfur protein family. Component of complex II composed of four subunits: a flavoprotein (FP), an iron-sulfur protein (IP), and a cytochrome b composed of a large and a small subunit. It depends on [2Fe-2S] cluster as a cofactor. Requires [3Fe-4S] cluster as cofactor. [4Fe-4S] cluster is required as a cofactor.

The protein resides in the mitochondrion inner membrane. The catalysed reaction is a quinone + succinate = fumarate + a quinol. It participates in carbohydrate metabolism; tricarboxylic acid cycle; fumarate from succinate (eukaryal route): step 1/1. Functionally, subunit of succinate dehydrogenase (SDH) that is involved in complex II of the mitochondrial electron transport chain and is responsible for transferring electrons from succinate to ubiquinone (coenzyme Q). SDH1 and SDH2 form the catalytic dimer. Electrons flow from succinate to the FAD bound to SDH1, and sequentially through the iron-sulfur clusters bound to SDH2 and enter the membrane dimer formed by SDH3 and SDH4. The polypeptide is Succinate dehydrogenase [ubiquinone] iron-sulfur subunit, mitochondrial (SDH2) (Saccharomyces cerevisiae (strain ATCC 204508 / S288c) (Baker's yeast)).